The primary structure comprises 239 residues: Fatty acid metabolism regulator protein (239 aa).

The HTH gntR-type domain occupies 6–74 (KGPASFAEKY…HGKPTRVNNF (69 aa)). The segment at residues 34–53 (ERELSELIGVTRTTLREVLQ) is a DNA-binding region (H-T-H motif).

Homodimer.

The protein resides in the cytoplasm. Functionally, multifunctional regulator of fatty acid metabolism. This is Fatty acid metabolism regulator protein from Shewanella pealeana (strain ATCC 700345 / ANG-SQ1).